The sequence spans 69 residues: Putative membrane protein insertion efficiency factor (69 aa).

The protein belongs to the UPF0161 family.

The protein resides in the cell inner membrane. In terms of biological role, could be involved in insertion of integral membrane proteins into the membrane. In Geobacter sulfurreducens (strain ATCC 51573 / DSM 12127 / PCA), this protein is Putative membrane protein insertion efficiency factor.